The sequence spans 506 residues: Glutamate--tRNA ligase (506 aa).

The short motif at 24 to 34 (PSPTGLQHIGG) is the 'HIGH' region element. 4 residues coordinate Zn(2+): Cys121, Cys123, Cys148, and His150. Positions 266–270 (KLSKR) match the 'KMSKS' region motif. Lys269 is an ATP binding site.

This sequence belongs to the class-I aminoacyl-tRNA synthetase family. Glutamate--tRNA ligase type 1 subfamily. As to quaternary structure, monomer. Requires Zn(2+) as cofactor.

The protein localises to the cytoplasm. It carries out the reaction tRNA(Glu) + L-glutamate + ATP = L-glutamyl-tRNA(Glu) + AMP + diphosphate. Catalyzes the attachment of glutamate to tRNA(Glu) in a two-step reaction: glutamate is first activated by ATP to form Glu-AMP and then transferred to the acceptor end of tRNA(Glu). This chain is Glutamate--tRNA ligase, found in Borrelia recurrentis (strain A1).